Consider the following 412-residue polypeptide: Angiopoietin-related protein 4 (412 aa).

Positions 1-23 are cleaved as a signal peptide; the sequence is MRSAPTARAALVLCAATAGLLSA. Residues 106–153 are a coiled coil; that stretch reads ETLHSLQTQLKAQNSKIQQLFQKVAQQQRHLEKQHLRIQNLQGQLDHL. Residue asparagine 183 is glycosylated (N-linked (GlcNAc...) asparagine). In terms of domain architecture, Fibrinogen C-terminal spans 185–407; the sequence is SRLHRLPRDC…ATTMLIQPTV (223 aa). 2 cysteine pairs are disulfide-bonded: cysteine 194-cysteine 222 and cysteine 347-cysteine 360.

As to quaternary structure, homooligomer; disulfide-linked via Cys residues in the N-terminal part of the protein. The homooligomer undergoes proteolytic processing to release the ANGPTL4 C-terminal chain, which circulates as a monomer. The homooligomer unprocessed form is able to interact with the extracellular matrix. Post-translationally, N-glycosylated. Forms disulfide-linked dimers and tetramers. In terms of processing, cleaved into a smaller N-terminal chain and a larger chain that contains the fibrinogen C-terminal domain; both cleaved and uncleaved forms are detected in the extracellular space. The cleaved form is not present within the cell.

The protein resides in the secreted. It localises to the extracellular space. It is found in the extracellular matrix. Its function is as follows. Mediates inactivation of the lipoprotein lipase LPL, and thereby plays a role in the regulation of triglyceride clearance from the blood serum and in lipid metabolism. May also play a role in regulating glucose homeostasis and insulin sensitivity. Inhibits proliferation, migration, and tubule formation of endothelial cells and reduces vascular leakage. Upon heterologous expression, inhibits the adhesion of endothelial cell to the extracellular matrix (ECM), and inhibits the reorganization of the actin cytoskeleton, formation of actin stress fibers and focal adhesions in endothelial cells that have adhered to ANGPTL4-containing ECM (in vitro). Depending on context, may modulate tumor-related angiogenesis. Mediates inactivation of the lipoprotein lipase LPL, and thereby plays an important role in the regulation of triglyceride clearance from the blood serum and in lipid metabolism. Has higher activity in LPL inactivation than the uncleaved protein. The protein is Angiopoietin-related protein 4 (ANGPTL4) of Sus scrofa (Pig).